Consider the following 63-residue polypeptide: Large ribosomal subunit protein eL37 (63 aa).

4 residues coordinate Zn(2+): Cys20, Cys23, Cys35, and Cys38. A C4-type zinc finger spans residues 20 to 38 (CRRCGRRAFNVKKGYCAAC).

It belongs to the eukaryotic ribosomal protein eL37 family. It depends on Zn(2+) as a cofactor.

Its function is as follows. Binds to the 23S rRNA. The polypeptide is Large ribosomal subunit protein eL37 (Thermococcus gammatolerans (strain DSM 15229 / JCM 11827 / EJ3)).